The chain runs to 115 residues: T cell receptor delta variable 1 (115 aa).

Residues 1-21 (MLFSSLLCVFVAFSYSGSSVA) form the signal peptide. Residues 22–115 (QKVTQAQSSV…SAKYFCALGE (94 aa)) form the Ig-like domain. A disulfide bridge connects residues Cys-43 and Cys-111.

As to quaternary structure, gamma-delta TR is a heterodimer composed of a gamma and delta chain; disulfide-linked. The gamma-delta TR is associated with the transmembrane signaling CD3 coreceptor proteins following the stoichiometry: a single gamma-delta TR heterodimer associates with one CD3D-CD3E heterodimer, one CD3G-CD3E heterodimer and one CD247 homodimer forming a stable octameric structure. Upon activation, gamma-delta TR complex associates with FCER1G to initiate intracellular signaling.

It localises to the cell membrane. In terms of biological role, v region of the variable domain of T cell receptor (TR) delta chain that participates in the antigen recognition. Gamma-delta TRs recognize a variety of self and foreign non-peptide antigens frequently expressed at the epithelial boundaries between the host and external environment, including endogenous lipids presented by MH-like protein CD1D and phosphoantigens presented by butyrophilin-like molecule BTN3A1. Upon antigen recognition induces rapid, innate-like immune responses involved in pathogen clearance and tissue repair. Binding of gamma-delta TR complex to antigen triggers phosphorylation of immunoreceptor tyrosine-based activation motifs (ITAMs) in the CD3 chains by the LCK and FYN kinases, allowing the recruitment, phosphorylation, and activation of ZAP70 that facilitates phosphorylation of the scaffolding proteins LCP2 and LAT. This lead to the formation of a supramolecular signalosome that recruits the phospholipase PLCG1, resulting in calcium mobilization and ERK activation, ultimately leading to T cell expansion and differentiation into effector cells. Gamma-delta TRs are produced through somatic rearrangement of a limited repertoire of variable (V), diversity (D), and joining (J) genes. The potential diversity of gamma-delta TRs is conferred by the unique ability to rearrange (D) genes in tandem and to utilize all three reading frames. The combinatorial diversity is considerably increased by the sequence exonuclease trimming and random nucleotide (N) region additions which occur during the V-(D)-J rearrangements. This is T cell receptor delta variable 1 from Homo sapiens (Human).